The sequence spans 390 residues: Malonyl-CoA-acyl carrier protein transacylase, mitochondrial (390 aa).

Residues 1–21 constitute a mitochondrion transit peptide; that stretch reads MSVRVARVAWVRGLGASYRRG. Active-site residues include S153 and H270. K314 carries the post-translational modification N6-succinyllysine.

The protein belongs to the type II malonyltransferase family.

It is found in the mitochondrion. It catalyses the reaction holo-[ACP] + malonyl-CoA = malonyl-[ACP] + CoA. It functions in the pathway lipid metabolism; fatty acid biosynthesis. Catalyzes the transfer of a malonyl moiety from malonyl-CoA to the free thiol group of the phosphopantetheine arm of the mitochondrial ACP protein (NDUFAB1). This suggests the existence of the biosynthesis of fatty acids in mitochondria. Also acts as a mitochondrial small ribosomal subunit (mt-SSU) assembly factor. The chain is Malonyl-CoA-acyl carrier protein transacylase, mitochondrial from Homo sapiens (Human).